Here is a 737-residue protein sequence, read N- to C-terminus: Phosphoribosylformylglycinamidine synthase subunit PurL (737 aa).

The active site involves H50. ATP is bound by residues Y53 and K92. E94 is a Mg(2+) binding site. Substrate-binding positions include 95–98 (SHNH) and R117. H96 serves as the catalytic Proton acceptor. D118 is a binding site for Mg(2+). Substrate is bound at residue Q241. A Mg(2+)-binding site is contributed by D269. 313 to 315 (ESQ) provides a ligand contact to substrate. Residues D494 and G531 each coordinate ATP. N532 lines the Mg(2+) pocket. S534 is a substrate binding site.

Belongs to the FGAMS family. In terms of assembly, monomer. Part of the FGAM synthase complex composed of 1 PurL, 1 PurQ and 2 PurS subunits.

It is found in the cytoplasm. The enzyme catalyses N(2)-formyl-N(1)-(5-phospho-beta-D-ribosyl)glycinamide + L-glutamine + ATP + H2O = 2-formamido-N(1)-(5-O-phospho-beta-D-ribosyl)acetamidine + L-glutamate + ADP + phosphate + H(+). The protein operates within purine metabolism; IMP biosynthesis via de novo pathway; 5-amino-1-(5-phospho-D-ribosyl)imidazole from N(2)-formyl-N(1)-(5-phospho-D-ribosyl)glycinamide: step 1/2. Its function is as follows. Part of the phosphoribosylformylglycinamidine synthase complex involved in the purines biosynthetic pathway. Catalyzes the ATP-dependent conversion of formylglycinamide ribonucleotide (FGAR) and glutamine to yield formylglycinamidine ribonucleotide (FGAM) and glutamate. The FGAM synthase complex is composed of three subunits. PurQ produces an ammonia molecule by converting glutamine to glutamate. PurL transfers the ammonia molecule to FGAR to form FGAM in an ATP-dependent manner. PurS interacts with PurQ and PurL and is thought to assist in the transfer of the ammonia molecule from PurQ to PurL. In Nitrobacter winogradskyi (strain ATCC 25391 / DSM 10237 / CIP 104748 / NCIMB 11846 / Nb-255), this protein is Phosphoribosylformylglycinamidine synthase subunit PurL.